We begin with the raw amino-acid sequence, 87 residues long: Spore morphogenesis and germination protein YwcE (87 aa).

3 helical membrane-spanning segments follow: residues 1-21 (MMDMFFAYLLVASATPLFIWL), 26-46 (VALSAIPPIILMWVFFFFYAT), and 56-76 (LMIILFAVNVIVAHIAAFIIY).

The protein belongs to the YwcE family.

It is found in the cell membrane. The protein localises to the spore membrane. The protein resides in the spore outer membrane. Required for proper spore morphogenesis. Important for spore germination. The chain is Spore morphogenesis and germination protein YwcE (ywcE) from Bacillus subtilis (strain 168).